Consider the following 179-residue polypeptide: Large ribosomal subunit protein uL10 (179 aa).

The protein belongs to the universal ribosomal protein uL10 family. In terms of assembly, part of the ribosomal stalk of the 50S ribosomal subunit. The N-terminus interacts with L11 and the large rRNA to form the base of the stalk. The C-terminus forms an elongated spine to which L12 dimers bind in a sequential fashion forming a multimeric L10(L12)X complex.

Its function is as follows. Forms part of the ribosomal stalk, playing a central role in the interaction of the ribosome with GTP-bound translation factors. The sequence is that of Large ribosomal subunit protein uL10 from Mycolicibacterium vanbaalenii (strain DSM 7251 / JCM 13017 / BCRC 16820 / KCTC 9966 / NRRL B-24157 / PYR-1) (Mycobacterium vanbaalenii).